The sequence spans 127 residues: Translation initiation factor 5A (127 aa).

Residue lysine 36 is modified to Hypusine.

The protein belongs to the eIF-5A family.

It localises to the cytoplasm. Functions by promoting the formation of the first peptide bond. In Halobacterium salinarum (strain ATCC 700922 / JCM 11081 / NRC-1) (Halobacterium halobium), this protein is Translation initiation factor 5A (eif5a).